Reading from the N-terminus, the 715-residue chain is Putative membrane protein IgaA homolog (715 aa).

The next 5 helical transmembrane spans lie at 2–22 (STIV…GLLW), 214–234 (EACA…GPTV), 235–255 (TLPW…WYLF), 349–369 (NLTL…YVPL), and 663–683 (ATSL…VLLI).

The protein belongs to the IgaA family.

It localises to the cell inner membrane. The protein is Putative membrane protein IgaA homolog of Yersinia pestis.